The following is a 130-amino-acid chain: Small ribosomal subunit protein uS11 (130 aa).

It belongs to the universal ribosomal protein uS11 family. As to quaternary structure, part of the 30S ribosomal subunit. Interacts with proteins S7 and S18. Binds to IF-3.

Located on the platform of the 30S subunit, it bridges several disparate RNA helices of the 16S rRNA. Forms part of the Shine-Dalgarno cleft in the 70S ribosome. The protein is Small ribosomal subunit protein uS11 of Microcystis aeruginosa (strain NIES-843 / IAM M-2473).